The following is a 1098-amino-acid chain: Bifunctional helicase and thymine dioxygenase JBP2 (1098 aa).

A thymine dioxygenase region spans residues 1 to 540; the sequence is MLNGLTRVST…PPLFVPTRLA (540 aa). The Fe cation site is built by His-415, Asp-417, and His-465. Arg-479 contributes to the 2-oxoglutarate binding site. A DNA Helicase region spans residues 541–1098; it reads SHLAPVQLAA…RYQESVRESE (558 aa). The Helicase ATP-binding domain occupies 555 to 730; the sequence is VERTEKQSGC…YRLVGWVNKG (176 aa). ATP is bound at residue 568–575; the sequence is MTMGLGKT. The DEAH box motif lies at 681–684; that stretch reads DEGH. Residues 897 to 1057 form the Helicase C-terminal domain; the sequence is VLVDIVLRVQ…ALPDELEDCA (161 aa).

It in the C-terminal section; belongs to the SNF2/RAD54 helicase family. This sequence in the N-terminal section; belongs to the TET family. JBP2 subfamily. It depends on Fe(2+) as a cofactor.

The protein localises to the nucleus. It catalyses the reaction ATP + H2O = ADP + phosphate + H(+). The catalysed reaction is thymine + 2-oxoglutarate + O2 = 5-hydroxymethyluracil + succinate + CO2. Dioxygenase that catalyzes the first step of DNA base J (beta-d-glucosyl-HOMedU) biosynthesis by converting thymine to 5-hydroxymethyluracil (HOMedU). DNA base J is a hypermodified thymidine residue found in the genome of kinetoplastid parasites, which is localized primarily to repetitive DNA, namely the telomeres, and is implicated in the regulation of antigenic variation. Probably also acts as a DNA helicase. Recognizes and binds specific regions of the genome, hydrolyzes ATP and allows the DNA base J de novo synthesis. Involved in initial synthesis of DNA base J, JBP1 being able to act via the basal level of DNA base J and propagate further synthesis. In contrast to JBP1, it does not specifically bind DNA base J, however it binds chromatin. This Leishmania infantum protein is Bifunctional helicase and thymine dioxygenase JBP2 (JBP2).